The sequence spans 150 residues: General odorant-binding protein 19d (150 aa).

The first 23 residues, 1–23 (MSHLVHLTVLLLVGILCLGATSA), serve as a signal peptide directing secretion. 3 cysteine pairs are disulfide-bonded: Cys-41–Cys-72, Cys-68–Cys-126, and Cys-116–Cys-135.

It belongs to the PBP/GOBP family. As to expression, expressed in the antenna, mostly on the anterior surface of the third antennal segment. Also detected in the maxillary palps and in cells at the bases of the taste hairs on the proboscis and internal taste organs of the head.

It is found in the secreted. The protein is General odorant-binding protein 19d (Obp19d) of Drosophila melanogaster (Fruit fly).